The chain runs to 85 residues: RDS3 complex subunit 10 (85 aa).

In terms of assembly, belongs to the SF3b complex composed of CUS1, HSH49, HSH155, RCP1, RDS3 and RSE1.

The protein resides in the nucleus. Functionally, involved in pre-mRNA splicing. Required for the SF3b integrity and prespliceosome assembly. This is RDS3 complex subunit 10 (YSF3) from Saccharomyces cerevisiae (strain ATCC 204508 / S288c) (Baker's yeast).